Reading from the N-terminus, the 248-residue chain is Triosephosphate isomerase (248 aa).

9–11 (NWK) serves as a coordination point for substrate. H94 serves as the catalytic Electrophile. E164 acts as the Proton acceptor in catalysis. Substrate contacts are provided by residues G170, S209, and 230 to 231 (GG).

It belongs to the triosephosphate isomerase family. In terms of assembly, homodimer.

Its subcellular location is the cytoplasm. The catalysed reaction is D-glyceraldehyde 3-phosphate = dihydroxyacetone phosphate. It participates in carbohydrate biosynthesis; gluconeogenesis. The protein operates within carbohydrate degradation; glycolysis; D-glyceraldehyde 3-phosphate from glycerone phosphate: step 1/1. In terms of biological role, involved in the gluconeogenesis. Catalyzes stereospecifically the conversion of dihydroxyacetone phosphate (DHAP) to D-glyceraldehyde-3-phosphate (G3P). This is Triosephosphate isomerase from Hahella chejuensis (strain KCTC 2396).